We begin with the raw amino-acid sequence, 24 residues long: Brevinin-1BYa (24 aa).

C18 and C24 are oxidised to a cystine.

Expressed by the skin glands.

The protein resides in the secreted. Functionally, antibacterial activity against Gram-positive bacterium S.aureus and Gram-negative bacterium E.coli. High antifungal activity against C.albicans and a strong hemolytic activity. The polypeptide is Brevinin-1BYa (Rana boylii (Foothill yellow-legged frog)).